The chain runs to 393 residues: MSSALANIYARLPVSFTHGRGVWLWDTGERRYLDALAGIGVSCLGHGHPGLVAAISEQAARLIHTSNIYEVPQQAALARRLAELSGMSEVLFSNSGSEANEAAIKLARYYGYKQGNTHAHIITMDSSWHGRTLATLAATGSDKARQGFGPMPSGFIQVPYNDLPAIRAAGEAEPRVTAVLLEVLQGEGGIRPSDMAFLRGVRQLCTERGWLLMIDEVQSGIGRTGKWFAHQWADIRPDVMTLAKGLAGGVPIGAMLAAGPAAGVFAPGSHGTTFGGGPLACAAGLAVIDAIEQEGLLANAHEVGAHLHAALASELAGVPGIIEVRGHGLMLGIELDRPCGILATRAMEAGLLINVTRERVVRLLPPLILSGEEADQIVRILVPLIKQFLAQQQ.

A N(2)-acetyl-L-ornithine-binding site is contributed by R131. 215–218 (DEVQ) is a binding site for pyridoxal 5'-phosphate. Position 244 is an N6-(pyridoxal phosphate)lysine (K244). T272 contributes to the N(2)-acetyl-L-ornithine binding site. Residue T273 participates in pyridoxal 5'-phosphate binding.

This sequence belongs to the class-III pyridoxal-phosphate-dependent aminotransferase family. ArgD subfamily. As to quaternary structure, homodimer. Pyridoxal 5'-phosphate is required as a cofactor.

The protein localises to the cytoplasm. It catalyses the reaction N(2)-acetyl-L-ornithine + 2-oxoglutarate = N-acetyl-L-glutamate 5-semialdehyde + L-glutamate. Its pathway is amino-acid biosynthesis; L-arginine biosynthesis; N(2)-acetyl-L-ornithine from L-glutamate: step 4/4. The protein is Acetylornithine aminotransferase 1 of Bordetella parapertussis (strain 12822 / ATCC BAA-587 / NCTC 13253).